Reading from the N-terminus, the 93-residue chain is MARVTVQEAADKIGNRFDLILTAARRARQLQLHVREPLVPEENDKPTVIALREIEKGLINGQIMDQLENNDAIQQEVAEQEAISFLADVQANA.

Belongs to the RNA polymerase subunit omega family. As to quaternary structure, the RNAP catalytic core consists of 2 alpha, 1 beta, 1 beta' and 1 omega subunit. When a sigma factor is associated with the core the holoenzyme is formed, which can initiate transcription.

The enzyme catalyses RNA(n) + a ribonucleoside 5'-triphosphate = RNA(n+1) + diphosphate. Its function is as follows. Promotes RNA polymerase assembly. Latches the N- and C-terminal regions of the beta' subunit thereby facilitating its interaction with the beta and alpha subunits. The protein is DNA-directed RNA polymerase subunit omega of Actinobacillus pleuropneumoniae serotype 3 (strain JL03).